The sequence spans 158 residues: Large ribosomal subunit protein mL50 (158 aa).

The protein belongs to the mitochondrion-specific ribosomal protein mL50 family. As to quaternary structure, component of the mitochondrial large ribosomal subunit (mt-LSU). Mature mammalian 55S mitochondrial ribosomes consist of a small (28S) and a large (39S) subunit. The 28S small subunit contains a 12S ribosomal RNA (12S mt-rRNA) and 30 different proteins. The 39S large subunit contains a 16S rRNA (16S mt-rRNA), a copy of mitochondrial valine transfer RNA (mt-tRNA(Val)), which plays an integral structural role, and 52 different proteins.

The protein resides in the mitochondrion. The polypeptide is Large ribosomal subunit protein mL50 (MRPL50) (Homo sapiens (Human)).